Reading from the N-terminus, the 200-residue chain is Phosphoheptose isomerase (200 aa).

In terms of domain architecture, SIS spans valine 37–leucine 199. A substrate-binding site is contributed by asparagine 52–glycine 54. Positions 61 and 65 each coordinate Zn(2+). Residues glutamate 65, asparagine 94–aspartate 95, threonine 120–serine 122, serine 125, and glutamine 175 each bind substrate. Residues glutamine 175 and histidine 183 each contribute to the Zn(2+) site.

It belongs to the SIS family. GmhA subfamily. As to quaternary structure, homotetramer. Zn(2+) serves as cofactor.

The protein resides in the cytoplasm. The enzyme catalyses 2 D-sedoheptulose 7-phosphate = D-glycero-alpha-D-manno-heptose 7-phosphate + D-glycero-beta-D-manno-heptose 7-phosphate. It participates in carbohydrate biosynthesis; D-glycero-D-manno-heptose 7-phosphate biosynthesis; D-glycero-alpha-D-manno-heptose 7-phosphate and D-glycero-beta-D-manno-heptose 7-phosphate from sedoheptulose 7-phosphate: step 1/1. Functionally, catalyzes the isomerization of sedoheptulose 7-phosphate in D-glycero-D-manno-heptose 7-phosphate. This is Phosphoheptose isomerase from Methylibium petroleiphilum (strain ATCC BAA-1232 / LMG 22953 / PM1).